The following is a 59-amino-acid chain: Protein translocase subunit SecE (59 aa).

The chain crosses the membrane as a helical span at residues 35–55 (IVAIGIAIIGVVGFIIVLIGE).

Belongs to the SecE/SEC61-gamma family. As to quaternary structure, component of the Sec protein translocase complex. Heterotrimer consisting of SecY (alpha), SecG (beta) and SecE (gamma) subunits. The heterotrimers can form oligomers, although 1 heterotrimer is thought to be able to translocate proteins. Interacts with the ribosome. May interact with SecDF, and other proteins may be involved.

Its subcellular location is the cell membrane. Its function is as follows. Essential subunit of the Sec protein translocation channel SecYEG. Clamps together the 2 halves of SecY. May contact the channel plug during translocation. This Methanobrevibacter smithii (strain ATCC 35061 / DSM 861 / OCM 144 / PS) protein is Protein translocase subunit SecE.